We begin with the raw amino-acid sequence, 27 residues long: Potassium channel toxin kappa-KTx 2.2 (27 aa).

2 disulfide bridges follow: Cys3–Cys21 and Cys7–Cys17.

Belongs to the short scorpion toxin superfamily. Potassium channel inhibitor kappa-KTx family. Kappa-KTx 2 subfamily. As to expression, expressed by the venom gland.

Its subcellular location is the secreted. OmTx1 decreases the amplitude of the potassium current of the rat channels Kv1.1/KCNA1 by 17% and Kv1.2/KCNA2 by 12% as well as human Kv1.3/KCNA3 by 24%. Functionally, omTx2 decreases the amplitude of the potassium current of the rat channels Kv1.1/KCNA1 by 8% and Kv1.2/KCNA2 by 10% as well as human Kv1.3/KCNA3 by 36%. Also alters glucose-induced insulin release from pancreatic islets. This Opisthacanthus madagascariensis (Scorpion) protein is Potassium channel toxin kappa-KTx 2.2.